The sequence spans 414 residues: Isocitrate dehydrogenase [NADP] cytoplasmic (414 aa).

Position 2 is an N-acetylserine (Ser2). A Phosphotyrosine modification is found at Tyr42. An NADP(+)-binding site is contributed by 75 to 77 (TIT). Thr77 is a substrate binding site. Position 81 is an N6-acetyllysine (Lys81). Arg82 serves as a coordination point for NADP(+). Substrate is bound by residues 94 to 100 (SPNGTIR) and Arg109. The residue at position 126 (Lys126) is an N6-succinyllysine. Residues Arg132 and Lys212 each coordinate substrate. N6-acetyllysine occurs at positions 224, 233, and 243. Residue Asp252 coordinates Mn(2+). Lys260 is an NADP(+) binding site. Residues Asp275 and Asp279 each contribute to the Mn(2+) site. Residue 310–315 (GTVTRH) participates in NADP(+) binding. Lys321 carries the N6-acetyllysine modification. Asn328 contacts NADP(+). Ser389 bears the Phosphoserine mark. Lys400 bears the N6-succinyllysine mark.

Belongs to the isocitrate and isopropylmalate dehydrogenases family. In terms of assembly, homodimer. Mg(2+) serves as cofactor. It depends on Mn(2+) as a cofactor. The N-terminus is blocked. In terms of processing, acetylation at Lys-374 dramatically reduces catalytic activity. In terms of tissue distribution, ubiquitous.

The protein resides in the cytoplasm. Its subcellular location is the cytosol. It localises to the peroxisome. It catalyses the reaction D-threo-isocitrate + NADP(+) = 2-oxoglutarate + CO2 + NADPH. In terms of biological role, catalyzes the NADP(+)-dependent oxidative decarboxylation of isocitrate (D-threo-isocitrate) to 2-ketoglutarate (2-oxoglutarate), which is required by other enzymes such as the phytanoyl-CoA dioxygenase. Plays a critical role in the generation of NADPH, an important cofactor in many biosynthesis pathways. May act as a corneal epithelial crystallin and may be involved in maintaining corneal epithelial transparency. This Rattus norvegicus (Rat) protein is Isocitrate dehydrogenase [NADP] cytoplasmic (Idh1).